The following is a 214-amino-acid chain: Large ribosomal subunit protein uL29m (214 aa).

It belongs to the universal ribosomal protein uL29 family. Component of the mitochondrial large ribosomal subunit. Mature mitochondrial ribosomes consist of a small (37S) and a large (54S) subunit. The 37S subunit contains at least 33 different proteins and 1 molecule of RNA (15S). The 54S subunit contains at least 45 different proteins and 1 molecule of RNA (21S).

The protein localises to the mitochondrion. In Aspergillus terreus (strain NIH 2624 / FGSC A1156), this protein is Large ribosomal subunit protein uL29m (mrpl4).